Consider the following 453-residue polypeptide: MLSRSRCVSRAFSRSLSAFQKGNCPLGRRSLPGVSLCQGPGYPNSRKVVINNSVFSVRFFRTTAVCKDDLVTVKTPAFAESVTEGDVRWEKAVGDTVAEDEVVCEIETDKTSVQVPSPANGVIEALLVPDGGKVEGGTPLFTLRKTGAAPAKAKPAEAPAAAAPKAEPTAAAVPPPAAPIPTQMPPVPSPSQPPSGKPVSAVKPTVAPPLAEPGAGKGLRSEHREKMNRMRQRIAQRLKEAQNTCAMLTTFNEIDMSNIQEMRARHKEAFLKKHNLKLGFMSAFVKASAFALQEQPVVNAVIDDTTKEVVYRDYIDISVAVATPRGLVVPVIRNVEAMNFADIERTITELGEKARKNELAIEDMDGGTFTISNGGVFGSLFGTPIINPPQSAILGMHGIFDRPVAIGGKVEVRPMMYVALTYDHRLIDGREAVTFLRKIKAAVEDPRVLLLDL.

The transit peptide at Met-1 to Lys-67 directs the protein to the mitochondrion. The 75-residue stretch at Leu-70–Arg-144 folds into the Lipoyl-binding domain. Ser-81 is modified (phosphoserine). Lys-110 carries the post-translational modification N6-lipoyllysine. Low complexity predominate over residues Lys-152–Ala-172. The disordered stretch occupies residues Lys-152 to Glu-225. Position 154 is an N6-acetyllysine (Lys-154). Over residues Val-173 to Gly-196 the composition is skewed to pro residues. 5 positions are modified to N6-acetyllysine: Lys-267, Lys-272, Lys-273, Lys-277, and Lys-307. Active-site residues include His-424 and Asp-428.

It belongs to the 2-oxoacid dehydrogenase family. As to quaternary structure, the 2-oxoglutarate dehydrogenase complex is composed of OGDH (2-oxoglutarate dehydrogenase; E1), DLST (dihydrolipoamide succinyltransferase; E2), DLD (dihydrolipoamide dehydrogenase; E3) and the assembly factor KGD4. It contains multiple copies of the three enzymatic components (E1, E2 and E3). In the nucleus, the 2-oxoglutarate dehydrogenase complex associates with KAT2A. Interacts with ABHD11; this interaction maintains the functional lipoylation of the 2-oxoglutarate dehydrogenase complex. (R)-lipoate serves as cofactor.

The protein resides in the mitochondrion matrix. Its subcellular location is the nucleus. The enzyme catalyses N(6)-[(R)-dihydrolipoyl]-L-lysyl-[protein] + succinyl-CoA = N(6)-[(R)-S(8)-succinyldihydrolipoyl]-L-lysyl-[protein] + CoA. The protein operates within amino-acid degradation; L-lysine degradation via saccharopine pathway; glutaryl-CoA from L-lysine: step 6/6. Its pathway is carbohydrate metabolism; tricarboxylic acid cycle. Functionally, dihydrolipoamide succinyltransferase (E2) component of the 2-oxoglutarate dehydrogenase complex. The 2-oxoglutarate dehydrogenase complex catalyzes the overall conversion of 2-oxoglutarate to succinyl-CoA and CO(2). The 2-oxoglutarate dehydrogenase complex is mainly active in the mitochondrion. A fraction of the 2-oxoglutarate dehydrogenase complex also localizes in the nucleus and is required for lysine succinylation of histones: associates with KAT2A on chromatin and provides succinyl-CoA to histone succinyltransferase KAT2A. The polypeptide is Dihydrolipoyllysine-residue succinyltransferase component of 2-oxoglutarate dehydrogenase complex, mitochondrial (Homo sapiens (Human)).